Reading from the N-terminus, the 518-residue chain is Beta-secretase 2 (518 aa).

The N-terminal stretch at 1 to 20 (MGALARALLLPLLAQWLLRA) is a signal peptide. A propeptide spanning residues 21–62 (APELAPAPFTLPLRVAAATNRVVAPTPGPGTPAERHADGLAL) is cleaved from the precursor. Over 21–473 (APELAPAPFT…SEPILWIVSY (453 aa)) the chain is Extracellular. A Peptidase A1 domain is found at 92 to 429 (YYLEMLIGTP…DRAQKRVGFA (338 aa)). D110 is a catalytic residue. A glycan (N-linked (GlcNAc...) asparagine) is linked at N170. Disulfide bonds link C233–C433, C292–C457, and C344–C393. Residue D303 is part of the active site. N-linked (GlcNAc...) asparagine glycosylation occurs at N366. The chain crosses the membrane as a helical span at residues 474–494 (ALMSVCGAILLVLIVLLLLPF). Residues 495–518 (RCQRRPRDPEVVNDESSLVRHRWK) are Cytoplasmic-facing.

This sequence belongs to the peptidase A1 family. As to quaternary structure, monomer. Interacts with RTN3 and RTN4. In terms of processing, undergoes autoproteolytic cleavage. Glycosylated. As to expression, brain. Present in neurons within the hippocampus, frontal cortex and temporal cortex (at protein level). Expressed at low levels in most peripheral tissues and at higher levels in colon, kidney, pancreas, placenta, prostate, stomach and trachea. Expressed at low levels in the brain. Found in spinal cord, medulla oblongata, substantia nigra and locus coruleus. Expressed in the ductal epithelium of both normal and malignant prostate.

The protein localises to the cell membrane. The protein resides in the golgi apparatus. It is found in the endoplasmic reticulum. It localises to the endosome. Its subcellular location is the melanosome. It catalyses the reaction Broad endopeptidase specificity. Cleaves Glu-Val-Asn-Leu-|-Asp-Ala-Glu-Phe in the Swedish variant of Alzheimer's amyloid precursor protein.. Functionally, responsible for the proteolytic processing of the amyloid precursor protein (APP). Cleaves APP, between residues 690 and 691, leading to the generation and extracellular release of beta-cleaved soluble APP, and a corresponding cell-associated C-terminal fragment which is later released by gamma-secretase. It has also been shown that it can cleave APP between residues 671 and 672. Involved in the proteolytic shedding of PMEL at early stages of melanosome biogenesis. Cleaves PMEL within the M-beta fragment to release the amyloidogenic PMEL luminal fragment containing M-alpha and a small portion of M-beta N-terminus. This is a prerequisite step for subsequent processing and assembly of PMEL fibrils into amyloid sheets. Responsible also for the proteolytic processing of CLTRN in pancreatic beta cells. In Homo sapiens (Human), this protein is Beta-secretase 2 (BACE2).